The following is a 162-amino-acid chain: MRLVVQRVLEAGVRVDDTPVATIGTGLLVLAGFGKDDDETLPDSRRWNAMCDKLIDLRIFPDAEGRMNRSLREHGGEVLLVSQFTLYADLRRGRRPSFQTAAPPDTARNLYERLVHDIDARLPGRVSSGIFGALMHVSLINWGPVTLCLDDAELFPEASVAG.

Positions 143–144 match the Gly-cisPro motif, important for rejection of L-amino acids motif; sequence GP.

The protein belongs to the DTD family. Homodimer.

Its subcellular location is the cytoplasm. It carries out the reaction glycyl-tRNA(Ala) + H2O = tRNA(Ala) + glycine + H(+). The catalysed reaction is a D-aminoacyl-tRNA + H2O = a tRNA + a D-alpha-amino acid + H(+). In terms of biological role, an aminoacyl-tRNA editing enzyme that deacylates mischarged D-aminoacyl-tRNAs. Also deacylates mischarged glycyl-tRNA(Ala), protecting cells against glycine mischarging by AlaRS. Acts via tRNA-based rather than protein-based catalysis; rejects L-amino acids rather than detecting D-amino acids in the active site. By recycling D-aminoacyl-tRNA to D-amino acids and free tRNA molecules, this enzyme counteracts the toxicity associated with the formation of D-aminoacyl-tRNA entities in vivo and helps enforce protein L-homochirality. In Nitratidesulfovibrio vulgaris (strain ATCC 29579 / DSM 644 / CCUG 34227 / NCIMB 8303 / VKM B-1760 / Hildenborough) (Desulfovibrio vulgaris), this protein is D-aminoacyl-tRNA deacylase.